The following is a 387-amino-acid chain: Lymphocyte transmembrane adapter 1 (387 aa).

At 1–37 the chain is on the extracellular side; sequence MDVTTSAWSETTRRISEPSTLQGTLGSLDKAEDHSSS. Residues 38-58 form a helical; Signal-anchor for type III membrane protein membrane-spanning segment; that stretch reads IFSGFAALLAILLVVAVICVL. The Cytoplasmic portion of the chain corresponds to 59 to 387; that stretch reads WCCGKRKKRQ…VCAAEAGARG (329 aa). Residues 114 to 136 form a disordered region; the sequence is VSTESLLSRNSDSPSSEHVPSRA. Over residues 118–129 the composition is skewed to low complexity; the sequence is SLLSRNSDSPSS. Tyr195 is subject to Phosphotyrosine. Residues 230–268 are disordered; sequence SEEIDEGCGNASDCTSLGSPGTENSDPLSDGEGSSQTSN. Over residues 241–268 the composition is skewed to polar residues; that stretch reads SDCTSLGSPGTENSDPLSDGEGSSQTSN. A phosphotyrosine mark is found at Tyr270 and Tyr296. The interval 294–387 is disordered; that stretch reads RDYENVPPGP…VCAAEAGARG (94 aa). Residues 319–329 are compositionally biased toward basic and acidic residues; the sequence is DHVEGRTDGPE. A compositionally biased stretch (acidic residues) spans 360–369; the sequence is PWEDAEETSS. Tyr375 carries the post-translational modification Phosphotyrosine.

When phosphorylated, interacts with GRB2, PIK3R1 and GRAP2. Post-translationally, phosphorylated on tyrosines upon TCR or BCR activation; which leads to the recruitment of GRB2, PIK3R1 and GRAP2.

The protein localises to the cell membrane. Negatively regulates TCR (T-cell antigen receptor)-mediated signaling in T-cells and BCR (B-cell antigen receptor)-mediated signaling in B-cells. This chain is Lymphocyte transmembrane adapter 1 (LAX1), found in Bos taurus (Bovine).